A 444-amino-acid chain; its full sequence is UDP-N-acetylmuramate--L-alanine ligase (444 aa).

111–117 (GAHGKTS) lines the ATP pocket.

This sequence belongs to the MurCDEF family.

It is found in the cytoplasm. It carries out the reaction UDP-N-acetyl-alpha-D-muramate + L-alanine + ATP = UDP-N-acetyl-alpha-D-muramoyl-L-alanine + ADP + phosphate + H(+). The protein operates within cell wall biogenesis; peptidoglycan biosynthesis. Cell wall formation. In Leuconostoc citreum (strain KM20), this protein is UDP-N-acetylmuramate--L-alanine ligase.